We begin with the raw amino-acid sequence, 388 residues long: Chorismate synthase (388 aa).

Residues arginine 39 and arginine 45 each contribute to the NADP(+) site. FMN is bound by residues 132-134 (RSS), 251-252 (NA), glycine 296, 311-315 (KPIPT), and arginine 337.

This sequence belongs to the chorismate synthase family. Homotetramer. It depends on FMNH2 as a cofactor.

It carries out the reaction 5-O-(1-carboxyvinyl)-3-phosphoshikimate = chorismate + phosphate. It functions in the pathway metabolic intermediate biosynthesis; chorismate biosynthesis; chorismate from D-erythrose 4-phosphate and phosphoenolpyruvate: step 7/7. Catalyzes the anti-1,4-elimination of the C-3 phosphate and the C-6 proR hydrogen from 5-enolpyruvylshikimate-3-phosphate (EPSP) to yield chorismate, which is the branch point compound that serves as the starting substrate for the three terminal pathways of aromatic amino acid biosynthesis. This reaction introduces a second double bond into the aromatic ring system. This Staphylococcus aureus (strain bovine RF122 / ET3-1) protein is Chorismate synthase.